Reading from the N-terminus, the 76-residue chain is MAKLLCSYLFICMFVLSGFLVFSSAKQLKTCTSVIKLGHPCDIESCLNECFRVYNTGFATCRGDKYSQLCTCEYNC.

Residues 1 to 25 (MAKLLCSYLFICMFVLSGFLVFSSA) form the signal peptide. 4 disulfides stabilise this stretch: C31–C76, C41–C61, C46–C70, and C50–C72.

Belongs to the DEFL family.

Its subcellular location is the secreted. In Arabidopsis thaliana (Mouse-ear cress), this protein is Defensin-like protein 164 (LCR38).